Reading from the N-terminus, the 711-residue chain is Hydroperoxide isomerase ALOXE3 (711 aa).

The PLAT domain occupies 2–119; it reads AVYRLCVTTG…TVELRPGTAR (118 aa). In terms of domain architecture, Lipoxygenase spans 120 to 711; that stretch reads TICQDSLPLL…PPLIENSVSI (592 aa). Fe cation contacts are provided by histidine 408, histidine 413, histidine 588, asparagine 592, and isoleucine 711.

This sequence belongs to the lipoxygenase family. It depends on Fe cation as a cofactor. Predominantly expressed in skin.

It is found in the cytoplasm. The catalysed reaction is a hydroperoxyeicosatetraenoate = a hydroxy-epoxy-eicosatetraenoate. The enzyme catalyses (12R)-hydroperoxy-(5Z,8Z,10E,14Z)-eicosatetraenoate = (8R)-hydroxy-(11R,12R)-epoxy-(5Z,9E,14Z)-eicosatrienoate. It carries out the reaction (12S)-hydroperoxy-(5Z,8Z,10E,14Z)-eicosatetraenoate = (8R)-hydroxy-(11S,12S)-epoxy-(5Z,9E,14Z)-eicosatrienoate. It catalyses the reaction (12S)-hydroperoxy-(5Z,8Z,10E,14Z)-eicosatetraenoate = (10R)-hydroxy-(11S,12S)-epoxy-(5Z,8Z,14Z)-eicosatrienoate. The catalysed reaction is (15S)-hydroperoxy-(5Z,8Z,11Z,13E)-eicosatetraenoate = (13R)-hydroxy-(14S,15S)-epoxy-(5Z,8Z,11Z)-eicosatrienoate. The enzyme catalyses (5S)-hydroperoxy-(6E,8Z,11Z,14Z)-eicosatetraenoate = 7R-hydroxy-5S,6S-epoxy-(8Z,11Z,14Z)-eicosatrienoate. It carries out the reaction (13S)-hydroperoxy-(9Z,11E)-octadecadienoate = 11-hydroxy-(12S,13S)-epoxy-(9Z)-octadecenoate. It catalyses the reaction N-[omega-(9R)-hydroperoxy-(10E,12Z)-octadecadienoyloxy]acyl-beta-D-glucosyl-(1&lt;-&gt;1)-octadecasphing-4E-enine = a N-[omega-(9R,10R)-epoxy-(13R)-hydroxy-(11E)-octadecenoyloxy]acyl-beta-D-glucosyl-(1&lt;-&gt;1)-sphing-4E-enine. The catalysed reaction is a N-[omega-(9R)-hydroperoxy-(10E,12Z)-octadecadienoyloxy]-acylsphin-4E-enine = a N-[omega-(9R,10R)-epoxy-(13R)-hydroxy-(11E)-octadecenoyloxy]-acylsphing-4E-enine. The enzyme catalyses a hydroperoxyeicosatetraenoate = an oxoeicosatetraenoate + H2O. It carries out the reaction (12R)-hydroperoxy-(5Z,8Z,10E,14Z)-eicosatetraenoate = 12-oxo-(5Z,8Z,10E,14Z)-eicosatetraenoate + H2O. It catalyses the reaction (12S)-hydroperoxy-(5Z,8Z,10E,14Z)-eicosatetraenoate = 12-oxo-(5Z,8Z,10E,14Z)-eicosatetraenoate + H2O. The catalysed reaction is (15S)-hydroperoxy-(5Z,8Z,11Z,13E)-eicosatetraenoate = 15-oxo-(5Z,8Z,11Z,13E)-eicosatetraenoate + H2O. The enzyme catalyses (13S)-hydroperoxy-(9Z,11E)-octadecadienoate = 13-oxo-(9Z,11E)-octadecadienoate + H2O. It carries out the reaction (8S)-hydroperoxy-(5Z,9E,11Z,14Z)-eicosatetraenoate = (10R)-hydroxy-(8S,9S)-epoxy-(5Z,11Z,14Z)-eicosatrienoate. It catalyses the reaction (8R)-hydroperoxy-(5Z,9E,11Z,14Z)-eicosatetraenoate = 8-oxo-(5Z,9E,11Z,14Z)-eicosatetraenoate + H2O. The catalysed reaction is (8S)-hydroperoxy-(5Z,9E,11Z,14Z)-eicosatetraenoate = 8-oxo-(5Z,9E,11Z,14Z)-eicosatetraenoate + H2O. Its pathway is lipid metabolism; hydroperoxy eicosatetraenoic acid biosynthesis. The protein operates within lipid metabolism; sphingolipid metabolism. With respect to regulation, lipoxygenase activity is activated by 13(S)-HPODE leading to an active free ferric enzyme. The lipoxygenase and hydroperoxide isomerase activities are in competition and are reciprocally regulated by oxygen. The oxygen reacts with an epoxyallylic radical intermediate leading to an epoxyallylic peroxyl radical, which, due to its limited reactivity within the enzyme active site, it dissociates and leaves the enzyme in the activated free ferric state. Its function is as follows. Non-heme iron-containing lipoxygenase which is atypical in that it displays a prominent hydroperoxide isomerase activity and a reduced lipoxygenases activity. The hydroperoxide isomerase activity catalyzes the isomerization of hydroperoxides, derived from arachidonic and linoleic acid by ALOX12B, into hepoxilin-type epoxyalcohols and ketones. In presence of oxygen, oxygenates polyunsaturated fatty acids, including arachidonic acid, to produce fatty acid hydroperoxides. In the skin, acts downstream of ALOX12B on the linoleate moiety of esterified omega-hydroxyacyl-sphingosine (EOS) ceramides to produce an epoxy-ketone derivative, a crucial step in the conjugation of omega-hydroxyceramide to membrane proteins. Therefore plays a crucial role in the synthesis of corneocytes lipid envelope and the establishment of the skin barrier to water loss. In parallel, it may have a signaling function in barrier formation through the production of hepoxilins metabolites. Also plays a role in adipocyte differentiation through hepoxilin A3 and hepoxilin B3 production which in turn activate PPARG. Through the production of hepoxilins in the spinal cord, it may regulate inflammatory tactile allodynia. This is Hydroperoxide isomerase ALOXE3 from Homo sapiens (Human).